Consider the following 528-residue polypeptide: Vacuolar fusion protein MON1 homolog (528 aa).

Residues 1–16 (MEVEQTSVRSDTNSTC) show a composition bias toward polar residues. The disordered stretch occupies residues 1–50 (MEVEQTSVRSDTNSTCEYLDAEGDPESPNLYQEADPDQEAEQQNHSIISE).

This sequence belongs to the MON1/SAND family. As to quaternary structure, component of the Mon1-Ccz1 guanyl-nucleotide exchange factor complex made up of Mon1, Ccz1 and Bulli; the interaction of Bulli with the Mon1-Ccz1 heterodimer is mediated via the C-terminal Mic1 domain of Bulli. Mon1 and Ccz1 form a stable complex which displays Rab7 GEF activity with or without Bulli; GEF activity is enhanced by Bulli possibly by improving membrane association of the complex. Interacts with Rab5 and Rab7; preferentially binds GTP-bound Rab5 and GDP-bound Rab7.

It is found in the cytoplasm. The protein resides in the cytosol. Its activity is regulated as follows. The Rab7 guanyl-nucleotide exchange factor (GEF) activity of the Mon1-Ccz1 complex is autoinhibited by the N-terminal disordered region of Mon1. GEF activity is stimulated by Rab5-mediated recruitment to membranes. In terms of biological role, part of the Mon1-Ccz1 guanyl-nucleotide exchange factor complex specific for Rab7 that promotes the exchange of GDP to GTP, converting Rab7 from an inactive GDP-bound form into an active GTP-bound form. Plays an important role in membrane trafficking through the secretory apparatus. Required for recruitment of Rab7 to endosomal and autophagosomal membranes to mediate endolysosomal and autolysosomal vesicle maturation. Required for fusion of multivesicular bodies and lysosomes but not their formation or trafficking. Involved in the replacement of Rab5 (and possibly Rab4) with Rab7, also known as Rab conversion or the Rab cascade, during endosomal maturation. The Mon1-Ccz1 complex is recruited to phosphatidylinositol 3-phosphate (PtdIns[3]P) enriched membranes by Rab5, which stimulates recruitment and guanyl-nucleotide exchange of Rab7. Together with Rab7 required for autolysosome formation in fat cells and autophagic degradation during starvation-induced basal and developmental autophagy. Involved in neuromuscular junction (NMJ) presynaptic bouton function and morphogenesis. Together with Rab7, regulates levels of postsynaptic glutamate receptor GluRIIA in the NMJ presynapse. This chain is Vacuolar fusion protein MON1 homolog, found in Drosophila melanogaster (Fruit fly).